The following is a 528-amino-acid chain: Ribonuclease Y (528 aa).

A helical membrane pass occupies residues 15-35 (SLFFLALICGSIIGYFLYSFF). The KH domain maps to 217–277 (NISVVNIPNE…IRREIAKKTL (61 aa)). Positions 343–436 (VLKHSLEVAF…VAIADTLSSA (94 aa)) constitute an HD domain.

This sequence belongs to the RNase Y family.

Its subcellular location is the cell membrane. Endoribonuclease that initiates mRNA decay. The chain is Ribonuclease Y from Aster yellows witches'-broom phytoplasma (strain AYWB).